A 538-amino-acid chain; its full sequence is Putative outer membrane porin BglH (538 aa).

Residues 1 to 25 (MFRRNLITSAILLMAPLAFSAQSLA) form the signal peptide. A disordered region spans residues 52–82 (KDEEKKKYTPATVNRSVSTNDQGYAANPFPT). Positions 62–73 (ATVNRSVSTNDQ) are enriched in polar residues.

Belongs to the porin LamB (TC 1.B.3) family.

It is found in the cell outer membrane. Functionally, may be a sugar porin with a broad carbohydrate specificity. The protein is Putative outer membrane porin BglH (bglH) of Shigella sonnei (strain Ss046).